The chain runs to 118 residues: UPF0251 protein TTE1845 (118 aa).

This sequence belongs to the UPF0251 family.

The chain is UPF0251 protein TTE1845 from Caldanaerobacter subterraneus subsp. tengcongensis (strain DSM 15242 / JCM 11007 / NBRC 100824 / MB4) (Thermoanaerobacter tengcongensis).